The following is a 95-amino-acid chain: Aspartyl/glutamyl-tRNA(Asn/Gln) amidotransferase subunit C (95 aa).

Belongs to the GatC family. Heterotrimer of A, B and C subunits.

The catalysed reaction is L-glutamyl-tRNA(Gln) + L-glutamine + ATP + H2O = L-glutaminyl-tRNA(Gln) + L-glutamate + ADP + phosphate + H(+). It carries out the reaction L-aspartyl-tRNA(Asn) + L-glutamine + ATP + H2O = L-asparaginyl-tRNA(Asn) + L-glutamate + ADP + phosphate + 2 H(+). In terms of biological role, allows the formation of correctly charged Asn-tRNA(Asn) or Gln-tRNA(Gln) through the transamidation of misacylated Asp-tRNA(Asn) or Glu-tRNA(Gln) in organisms which lack either or both of asparaginyl-tRNA or glutaminyl-tRNA synthetases. The reaction takes place in the presence of glutamine and ATP through an activated phospho-Asp-tRNA(Asn) or phospho-Glu-tRNA(Gln). This chain is Aspartyl/glutamyl-tRNA(Asn/Gln) amidotransferase subunit C, found in Pseudomonas syringae pv. syringae (strain B728a).